We begin with the raw amino-acid sequence, 392 residues long: GDP-mannose transporter (392 aa).

Positions 1 to 40 (MANKRNEDIELGPAEGRGSTDKDPFLARRSSSQPNRPQQA) are disordered. Over 1 to 55 (MANKRNEDIELGPAEGRGSTDKDPFLARRSSSQPNRPQQAGPFGGYFDKIDHSPG) the chain is Cytoplasmic. A compositionally biased stretch (polar residues) spans 29–38 (RSSSQPNRPQ). Residues 56–76 (ASIIAYCLSSISMTVVNKYVV) traverse the membrane as a helical segment. The Lumenal segment spans residues 77 to 80 (SGSE). The helical transmembrane segment at 81–101 (WNLNFFYLAVQSLVCTAAILI) threads the bilayer. The Cytoplasmic segment spans residues 102–121 (CKQLGMFQNLAAFDSTKAKK). The chain crosses the membrane as a helical span at residues 122 to 144 (WFPISLLLVGMIYTSTKALQFLS). The Lumenal segment spans residues 145–149 (VPVYT). A helical membrane pass occupies residues 150-168 (IFKNLTIIVVAYGEVLWFG). The Cytoplasmic portion of the chain corresponds to 169–174 (GSVTPM). A helical membrane pass occupies residues 175–198 (ALLSFGLMVLSSVIAAWADIQAAV). Topologically, residues 199–213 (EGVGHTAEATDAIST) are lumenal. A helical transmembrane segment spans residues 214-234 (LNAGYAWMGMNVFCTAAYLLG). Residues 235-248 (MRKVIKKMNFKDYD) are Cytoplasmic-facing. A helical transmembrane segment spans residues 249 to 269 (TMFYNNLLTIPVLIVFSLLFE). The Lumenal portion of the chain corresponds to 270 to 287 (DWSNDNLIKNFPVETRNS). A helical membrane pass occupies residues 288 to 308 (LFIGMIYSGLAAIFISYCSAW). Residues 309 to 316 (CIRVTSST) are Cytoplasmic-facing. The chain crosses the membrane as a helical span at residues 317 to 337 (TYSMVGALNKLPLAISGLIFF). The Lumenal segment spans residues 338-342 (DAPVT). The helical transmembrane segment at 343 to 361 (FGSVTAIFVGFVSGLVYTW) threads the bilayer. The Cytoplasmic segment spans residues 362–392 (SKTRQKVSQILPTTQPTMSASAASNRDAANA).

The protein belongs to the TPT transporter family. SLC35D subfamily. Homooligomer.

It is found in the golgi apparatus membrane. The protein resides in the cytoplasmic vesicle membrane. It localises to the endoplasmic reticulum membrane. In terms of biological role, involved in the import of GDP-mannose from the cytoplasm into the Golgi lumen. The chain is GDP-mannose transporter (vrg-4) from Neurospora crassa (strain ATCC 24698 / 74-OR23-1A / CBS 708.71 / DSM 1257 / FGSC 987).